The sequence spans 182 residues: Homeobox expressed in ES cells 1-A (182 aa).

The homeobox DNA-binding region spans 103-163 (YRGRRPRTAF…QNRRAKLKRS (61 aa)).

Belongs to the ANF homeobox family. Initially expressed in the anterior dorsal region of early embryos and later exclusively in the primordium of the anterior pituitary gland.

It is found in the nucleus. In terms of biological role, appears to be involved in the regional specification of the anterior head of Xenopus embryos. This is Homeobox expressed in ES cells 1-A (hesx1-a) from Xenopus laevis (African clawed frog).